We begin with the raw amino-acid sequence, 133 residues long: MSLTLRVLAPDQSVFDGTAEEVILPSTTGLIGILPGHISLVTALDIGVMRVRANGAWNSIALMGGFAEVEADDVTVLVNGAELGKSIDATTAEAELEQAKAKVSQMEGQEPSTEKIKAQQNFNRARARVQATK.

The interval 103–133 (VSQMEGQEPSTEKIKAQQNFNRARARVQATK) is disordered.

This sequence belongs to the ATPase epsilon chain family. As to quaternary structure, F-type ATPases have 2 components, CF(1) - the catalytic core - and CF(0) - the membrane proton channel. CF(1) has five subunits: alpha(3), beta(3), gamma(1), delta(1), epsilon(1). CF(0) has three main subunits: a, b and c.

The protein localises to the cellular thylakoid membrane. Produces ATP from ADP in the presence of a proton gradient across the membrane. In Prochlorococcus marinus (strain MIT 9313), this protein is ATP synthase epsilon chain.